Reading from the N-terminus, the 354-residue chain is Uroporphyrinogen decarboxylase (354 aa).

Residues 27 to 31 (RQAGR), D77, Y153, T208, and H326 contribute to the substrate site.

The protein belongs to the uroporphyrinogen decarboxylase family. Homodimer.

The protein resides in the cytoplasm. The enzyme catalyses uroporphyrinogen III + 4 H(+) = coproporphyrinogen III + 4 CO2. It participates in porphyrin-containing compound metabolism; protoporphyrin-IX biosynthesis; coproporphyrinogen-III from 5-aminolevulinate: step 4/4. Functionally, catalyzes the decarboxylation of four acetate groups of uroporphyrinogen-III to yield coproporphyrinogen-III. The sequence is that of Uroporphyrinogen decarboxylase from Neisseria meningitidis serogroup C / serotype 2a (strain ATCC 700532 / DSM 15464 / FAM18).